The following is a 586-amino-acid chain: CTP synthase 2 (586 aa).

The Glutamine amidotransferase type-1 domain maps to 300 to 554 (SIALVGKYTK…LAATGNLNAH (255 aa)). Catalysis depends on for GATase activity residues Cys399, His526, and Glu528. 3 positions are modified to phosphoserine: Ser568, Ser571, and Ser574.

The protein belongs to the CTP synthase family.

It catalyses the reaction UTP + L-glutamine + ATP + H2O = CTP + L-glutamate + ADP + phosphate + 2 H(+). Its pathway is pyrimidine metabolism; CTP biosynthesis via de novo pathway; CTP from UDP: step 2/2. Its function is as follows. Catalyzes the ATP-dependent amination of UTP to CTP with either L-glutamine or ammonia as the source of nitrogen. Constitutes the rate-limiting enzyme in the synthesis of cytosine nucleotides. This chain is CTP synthase 2 (Ctps2), found in Mus musculus (Mouse).